The following is a 159-amino-acid chain: 17 kDa surface antigen (159 aa).

The N-terminal stretch at 1–19 (MKLLSKIMIIALAASMLQA) is a signal peptide. Cys20 is lipidated: N-palmitoyl cysteine. Residue Cys20 is the site of S-diacylglycerol cysteine attachment.

This sequence belongs to the rickettsiale 17 kDa surface antigen family.

Its subcellular location is the cell outer membrane. The polypeptide is 17 kDa surface antigen (omp) (Rickettsia prowazekii (strain Madrid E)).